Consider the following 380-residue polypeptide: Putative glutamate--cysteine ligase 2-1 (380 aa).

The protein belongs to the glutamate--cysteine ligase type 2 family. YbdK subfamily.

It carries out the reaction L-cysteine + L-glutamate + ATP = gamma-L-glutamyl-L-cysteine + ADP + phosphate + H(+). Its function is as follows. ATP-dependent carboxylate-amine ligase which exhibits weak glutamate--cysteine ligase activity. The sequence is that of Putative glutamate--cysteine ligase 2-1 from Mycolicibacterium vanbaalenii (strain DSM 7251 / JCM 13017 / BCRC 16820 / KCTC 9966 / NRRL B-24157 / PYR-1) (Mycobacterium vanbaalenii).